We begin with the raw amino-acid sequence, 426 residues long: Oligouridylate-binding protein 1A (426 aa).

The segment at 1–26 (MQNQRLIKQQQQQQQQQHQQAMIQQA) is disordered. Positions 9 to 26 (QQQQQQQQQHQQAMIQQA) are enriched in low complexity. RRM domains lie at 63 to 137 (RSVY…WAYA) and 148 to 226 (FNIF…WATK). Residues 230 to 268 (FGEDKHSSDGKSVVELTNGSSEDGRELSNEDAPENNPQF) are disordered. Serine 250 carries the post-translational modification Phosphoserine. Residues 269–344 (TTVYVGNLSP…RQIRCSWGNK (76 aa)) form the RRM 3 domain.

As to quaternary structure, interacts with UBA1A and UBA2A.

The protein resides in the nucleus. Heterogeneous nuclear ribonucleoprotein (hnRNP)-like protein that acts as a component of the pre-mRNA processing machinery. Functions to facilitate the nuclear maturation of plant pre-mRNAs. The sequence is that of Oligouridylate-binding protein 1A (UBP1A) from Arabidopsis thaliana (Mouse-ear cress).